The primary structure comprises 132 residues: Small ribosomal subunit protein uS8 (132 aa).

Belongs to the universal ribosomal protein uS8 family. Part of the 30S ribosomal subunit. Contacts proteins S5 and S12.

Functionally, one of the primary rRNA binding proteins, it binds directly to 16S rRNA central domain where it helps coordinate assembly of the platform of the 30S subunit. This Paracoccus denitrificans (strain Pd 1222) protein is Small ribosomal subunit protein uS8.